A 265-amino-acid polypeptide reads, in one-letter code: Hydroxyethylthiazole kinase 2 (265 aa).

Methionine 39 serves as a coordination point for substrate. ATP-binding residues include lysine 115 and threonine 168. Glycine 195 provides a ligand contact to substrate.

This sequence belongs to the Thz kinase family. Requires Mg(2+) as cofactor.

The enzyme catalyses 5-(2-hydroxyethyl)-4-methylthiazole + ATP = 4-methyl-5-(2-phosphooxyethyl)-thiazole + ADP + H(+). It participates in cofactor biosynthesis; thiamine diphosphate biosynthesis; 4-methyl-5-(2-phosphoethyl)-thiazole from 5-(2-hydroxyethyl)-4-methylthiazole: step 1/1. Its function is as follows. Catalyzes the phosphorylation of the hydroxyl group of 4-methyl-5-beta-hydroxyethylthiazole (THZ). This chain is Hydroxyethylthiazole kinase 2, found in Clostridium botulinum (strain ATCC 19397 / Type A).